We begin with the raw amino-acid sequence, 373 residues long: Ubiquitin carboxyl-terminal hydrolase 50 (373 aa).

Residues 44-364 form the USP domain; that stretch reads TGLRNLGNTC…TAYLLFYSCQ (321 aa). Cysteine 53 (nucleophile) is an active-site residue. Histidine 322 functions as the Proton acceptor in the catalytic mechanism.

It belongs to the peptidase C19 family.

The protein resides in the cytoplasm. The protein localises to the cytoskeleton. Its subcellular location is the microtubule organizing center. It is found in the centrosome. It localises to the nucleus. The enzyme catalyses Thiol-dependent hydrolysis of ester, thioester, amide, peptide and isopeptide bonds formed by the C-terminal Gly of ubiquitin (a 76-residue protein attached to proteins as an intracellular targeting signal).. Its function is as follows. Deubiquitinating enzyme that removes conjugated ubiquitin from specific proteins to regulate different cellular processes. Regulates the inflammasome signaling pathway by deubiquitinating 'Lys-63'-linked polyubiquitination of the PYCARD/ASC adapter protein. Regulates the ubiquitination and stability of the ACE2 protein. Acts as a negative regulator of the G2/M checkpoint pathway, by preventing serine/threonine kinase WEE1 degradation, thereby repressing entry into mitosis following activation of the G2/M DNA damage checkpoint. The sequence is that of Ubiquitin carboxyl-terminal hydrolase 50 (USP50) from Macaca fascicularis (Crab-eating macaque).